The sequence spans 378 residues: Isobutylamine N-hydroxylase (378 aa).

As to quaternary structure, exists in dimeric or trimeric form depending upon buffer conditions. It can form an isobutylamine N-hydroxylase two component enzyme system formed of a flavin reductase component (VlmR) and a monooxygenase component (VlmH).

It carries out the reaction 2-methylpropan-1-amine + FADH2 + O2 = N-(2-methylpropyl)hydroxylamine + FAD + H2O + 2 H(+). The enzyme catalyses 2-methylpropan-1-amine + FMNH2 + O2 = N-(2-methylpropyl)hydroxylamine + FMN + H2O + 2 H(+). Its activity is regulated as follows. Inhibited by 5',5'-dithio-bis(2-nitrobenzoic acid) (DTNB) and 4-(hydroxymercuri)benzoic acid (p-HMB). Its function is as follows. Involved in the biosynthesis of the azoxy antibiotic valanimycin, which has an antitumor activity. Catalyzes the oxidation of isobutylamine to isobutylhydroxylamine via the formation of a flavin 4a-hydroperoxide. Unlike other known N-hydroxylases, isobutylamine N-hydroxylase cannot carry out the reduction of the flavin cofactor and requires the NADPH-flavin oxidoreductase VlmR. Also able to oxidize propan-1-amine, butan-1-amine, butan-2-amine and benzylamine. It has a similar activity with either FMNH(2) or FADH(2). The chain is Isobutylamine N-hydroxylase from Streptomyces viridifaciens.